Reading from the N-terminus, the 473-residue chain is Trigger factor (473 aa).

Residues Gly174–Pro261 enclose the PPIase FKBP-type domain. The disordered stretch occupies residues Ala442 to Asn473. Positions Lys444–Ala453 are enriched in low complexity. Basic residues predominate over residues Thr454–Val467.

It belongs to the FKBP-type PPIase family. Tig subfamily.

The protein resides in the cytoplasm. It catalyses the reaction [protein]-peptidylproline (omega=180) = [protein]-peptidylproline (omega=0). Functionally, involved in protein export. Acts as a chaperone by maintaining the newly synthesized protein in an open conformation. Functions as a peptidyl-prolyl cis-trans isomerase. This is Trigger factor from Prochlorococcus marinus subsp. pastoris (strain CCMP1986 / NIES-2087 / MED4).